Consider the following 90-residue polypeptide: Small ribosomal subunit protein uS15 (90 aa).

It belongs to the universal ribosomal protein uS15 family. Part of the 30S ribosomal subunit. Forms a bridge to the 50S subunit in the 70S ribosome, contacting the 23S rRNA.

In terms of biological role, one of the primary rRNA binding proteins, it binds directly to 16S rRNA where it helps nucleate assembly of the platform of the 30S subunit by binding and bridging several RNA helices of the 16S rRNA. Functionally, forms an intersubunit bridge (bridge B4) with the 23S rRNA of the 50S subunit in the ribosome. In Aquifex aeolicus (strain VF5), this protein is Small ribosomal subunit protein uS15.